Reading from the N-terminus, the 288-residue chain is Light-independent protochlorophyllide reductase iron-sulfur ATP-binding protein (288 aa).

Residues 12–17 (GIGKST) and Lys-41 each bind ATP. Mg(2+) is bound at residue Ser-16. Residues Cys-97 and Cys-131 each coordinate [4Fe-4S] cluster. 182–183 (NR) lines the ATP pocket.

The protein belongs to the NifH/BchL/ChlL family. In terms of assembly, homodimer. Protochlorophyllide reductase is composed of three subunits; ChlL, ChlN and ChlB. [4Fe-4S] cluster is required as a cofactor.

It catalyses the reaction chlorophyllide a + oxidized 2[4Fe-4S]-[ferredoxin] + 2 ADP + 2 phosphate = protochlorophyllide a + reduced 2[4Fe-4S]-[ferredoxin] + 2 ATP + 2 H2O. It functions in the pathway porphyrin-containing compound metabolism; chlorophyll biosynthesis (light-independent). In terms of biological role, component of the dark-operative protochlorophyllide reductase (DPOR) that uses Mg-ATP and reduced ferredoxin to reduce ring D of protochlorophyllide (Pchlide) to form chlorophyllide a (Chlide). This reaction is light-independent. The L component serves as a unique electron donor to the NB-component of the complex, and binds Mg-ATP. This is Light-independent protochlorophyllide reductase iron-sulfur ATP-binding protein from Picosynechococcus sp. (strain ATCC 27264 / PCC 7002 / PR-6) (Agmenellum quadruplicatum).